The primary structure comprises 121 residues: Protein CHLORORESPIRATORY REDUCTION 42, chloroplastic (121 aa).

In terms of assembly, biogenesis factor component of the plastidial NDH subcomplex A.

The protein localises to the plastid. It is found in the chloroplast. It localises to the chloroplast stroma. Required for both formation and activity of the chloroplast NAD(P)H dehydrogenase (NDH) complex of the photosynthetic electron transport chain. Functions in assembly or stabilization of the NDH complex; probably involved, together with CRR1 and CRR6, in the incorporation of NdhJ, NdhM, NdhK and NdhI into the NDH subcomplex A assembly intermediate (NAI500) to produce the complex NAI400. The chain is Protein CHLORORESPIRATORY REDUCTION 42, chloroplastic from Arabidopsis thaliana (Mouse-ear cress).